A 429-amino-acid chain; its full sequence is uncharacterized protein (429 aa).

A run of 11 helical transmembrane segments spans residues 27–47, 48–68, 78–98, 106–126, 142–162, 198–218, 219–239, 249–269, 288–308, 351–371, and 399–419; these read PFFF…QSIG, GIMT…VSIL, ILLC…YWVF, IFIL…FLAL, ALII…PAII, LLLA…TIVI, AILT…CFYF, VLLS…YFLD, FIVG…FGYL, LILD…IYFI, and FFIS…LIIL.

The protein resides in the cell membrane. Functionally, may function as a transporter. This is an uncharacterized protein from Klebsiella pneumoniae.